We begin with the raw amino-acid sequence, 190 residues long: Vascular endothelial growth factor A (190 aa).

An N-terminal signal peptide occupies residues 1 to 26 (MNFLLSWVHWSLALLLYLHHAKWSQA). 3 disulfide bridges follow: cysteine 51-cysteine 93, cysteine 82-cysteine 127, and cysteine 86-cysteine 129. Asparagine 100 carries N-linked (GlcNAc...) asparagine glycosylation.

This sequence belongs to the PDGF/VEGF growth factor family. As to quaternary structure, homodimer; disulfide-linked. Also found as heterodimer with PGF. Interacts with NRP1. Interacts with isoform 2 of BSG. Interacts with CD82; this interaction inhibits VEGFA-mediated signaling pathway.

It is found in the secreted. Its function is as follows. Growth factor active in angiogenesis, vasculogenesis and endothelial cell growth. Induces endothelial cell proliferation, promotes cell migration, inhibits apoptosis and induces permeabilization of blood vessels. Binds to the FLT1/VEGFR1 and KDR/VEGFR2 receptors, heparan sulfate and heparin. Binding to NRP1 receptor initiates a signaling pathway needed for motor neuron axon guidance and cell body migration, including for the caudal migration of facial motor neurons from rhombomere 4 to rhombomere 6 during embryonic development. Also binds the DEAR/FBXW7-AS1 receptor. The protein is Vascular endothelial growth factor A (VEGFA) of Equus caballus (Horse).